A 540-amino-acid polypeptide reads, in one-letter code: NAD(P)H-quinone oxidoreductase subunit 2 B, chloroplastic (540 aa).

13 helical membrane passes run 24–44, 57–77, 99–119, 124–144, 149–169, 183–203, 227–247, 325–345, 353–373, 384–404, 425–445, 448–468, and 514–534; these read LLLFDGSLIFPECILIFGLIL, IPWLYFIPSTSLVMSITALLF, IFQFLILLCSTLCIPLSVEYI, MAITEFLLFVLTATLGGMFLC, FITIFVAPECFSLCSYLLSGY, YLLMGGASSSILVHGFSWLYG, PGISIALIFITVGIGFKLSPA, WHLLLEILAILSMILGNLIAI, MLAYSSIGQIGYVIIGIIVGD, YMLFYISMNLGTFACIVLFGL, ALSLALCLLSLGGLPPLAGFF, LYLFWCGWQAGLYFLVLIGLL, and MIVCVIASTIPGISMNPIIAI.

It belongs to the complex I subunit 2 family. As to quaternary structure, NDH is composed of at least 16 different subunits, 5 of which are encoded in the nucleus.

Its subcellular location is the plastid. The protein localises to the chloroplast thylakoid membrane. It catalyses the reaction a plastoquinone + NADH + (n+1) H(+)(in) = a plastoquinol + NAD(+) + n H(+)(out). The enzyme catalyses a plastoquinone + NADPH + (n+1) H(+)(in) = a plastoquinol + NADP(+) + n H(+)(out). In terms of biological role, NDH shuttles electrons from NAD(P)H:plastoquinone, via FMN and iron-sulfur (Fe-S) centers, to quinones in the photosynthetic chain and possibly in a chloroplast respiratory chain. The immediate electron acceptor for the enzyme in this species is believed to be plastoquinone. Couples the redox reaction to proton translocation, and thus conserves the redox energy in a proton gradient. In Coffea arabica (Arabian coffee), this protein is NAD(P)H-quinone oxidoreductase subunit 2 B, chloroplastic.